The primary structure comprises 695 residues: NADPH--cytochrome P450 reductase (695 aa).

Topologically, residues 1–8 (MAQLDTLD) are lumenal. The chain crosses the membrane as a helical span at residues 9-31 (LVVLAVLLVGSVAYFTKGTYWAV). Topologically, residues 32 to 695 (AKDPYASTGP…SGSYQEDVWS (664 aa)) are cytoplasmic. Positions 66–221 (CVIFYGSQTG…DFLAWKEPMW (156 aa)) constitute a Flavodoxin-like domain. FMN is bound by residues 72–77 (SQTGTA), 123–126 (ATYG), 169–178 (LGNNTYEHYN), and aspartate 204. Residues 277–538 (HNPFIAPIAE…HVRHSNFKLP (262 aa)) enclose the FAD-binding FR-type domain. Arginine 296 is an NADP(+) binding site. Residues 451 to 454 (RYYS), 469 to 471 (TAV), and 486 to 489 (GVTT) contribute to the FAD site. NADP(+) is bound by residues threonine 552, 614 to 615 (SR), 620 to 624 (KVYVQ), and glutamate 656. Residue tryptophan 694 participates in FAD binding.

The protein belongs to the NADPH--cytochrome P450 reductase family. In the N-terminal section; belongs to the flavodoxin family. It in the C-terminal section; belongs to the flavoprotein pyridine nucleotide cytochrome reductase family. FAD is required as a cofactor. FMN serves as cofactor.

The protein localises to the endoplasmic reticulum membrane. It localises to the mitochondrion outer membrane. The protein resides in the cell membrane. The catalysed reaction is 2 oxidized [cytochrome P450] + NADPH = 2 reduced [cytochrome P450] + NADP(+) + H(+). This enzyme is required for electron transfer from NADP to cytochrome P450 in microsomes. It can also provide electron transfer to heme oxygenase and cytochrome B5. Involved in ergosterol biosynthesis. This chain is NADPH--cytochrome P450 reductase, found in Aspergillus niger (strain ATCC MYA-4892 / CBS 513.88 / FGSC A1513).